We begin with the raw amino-acid sequence, 362 residues long: Chorismate synthase (362 aa).

Residue arginine 46 participates in NADP(+) binding. FMN contacts are provided by residues 121–123 (RAS), 237–238 (NA), glycine 277, 292–296 (KPTPS), and arginine 318.

It belongs to the chorismate synthase family. In terms of assembly, homotetramer. The cofactor is FMNH2.

It carries out the reaction 5-O-(1-carboxyvinyl)-3-phosphoshikimate = chorismate + phosphate. Its pathway is metabolic intermediate biosynthesis; chorismate biosynthesis; chorismate from D-erythrose 4-phosphate and phosphoenolpyruvate: step 7/7. Catalyzes the anti-1,4-elimination of the C-3 phosphate and the C-6 proR hydrogen from 5-enolpyruvylshikimate-3-phosphate (EPSP) to yield chorismate, which is the branch point compound that serves as the starting substrate for the three terminal pathways of aromatic amino acid biosynthesis. This reaction introduces a second double bond into the aromatic ring system. In Campylobacter lari (strain RM2100 / D67 / ATCC BAA-1060), this protein is Chorismate synthase.